A 298-amino-acid chain; its full sequence is MQRLSLPAPAKLNRMLHIVGRRADGYHELQTLFQFLDRSDTLHFSPRADGAIHLAPAIADVDHDANLIVRAARLLQHASGTHQGVDIHLDKRLPMGGGLGGGSSDAATTLLALDRLWSLDLGLPRLAELGLTLGADVPVFVRGHSAWAEGIGERLTPVTLDTPWFVVIHPGEEIATPAVFGHPELTRDTPPISMARALRGGAEQGRAWRNDCEAVVRRLSPDVAHALDWLSAFGPAMLTGTGSCLFCPLTSERQADRILRRVGSHWHAFKARGCNTSPLHDALGIHDEWSPMSQYGDA.

Lysine 11 is a catalytic residue. Residue 94 to 104 (PMGGGLGGGSS) coordinates ATP. Residue aspartate 136 is part of the active site.

It belongs to the GHMP kinase family. IspE subfamily.

The catalysed reaction is 4-CDP-2-C-methyl-D-erythritol + ATP = 4-CDP-2-C-methyl-D-erythritol 2-phosphate + ADP + H(+). Its pathway is isoprenoid biosynthesis; isopentenyl diphosphate biosynthesis via DXP pathway; isopentenyl diphosphate from 1-deoxy-D-xylulose 5-phosphate: step 3/6. Functionally, catalyzes the phosphorylation of the position 2 hydroxy group of 4-diphosphocytidyl-2C-methyl-D-erythritol. In Chromohalobacter salexigens (strain ATCC BAA-138 / DSM 3043 / CIP 106854 / NCIMB 13768 / 1H11), this protein is 4-diphosphocytidyl-2-C-methyl-D-erythritol kinase.